The sequence spans 158 residues: 3-dehydroquinate dehydratase (158 aa).

The Proton acceptor role is filled by Tyr-22. 3 residues coordinate substrate: Asn-74, His-80, and Asp-87. His-100 (proton donor) is an active-site residue. Residues 101 to 102 (IS) and Arg-111 contribute to the substrate site.

Belongs to the type-II 3-dehydroquinase family. In terms of assembly, homododecamer.

The enzyme catalyses 3-dehydroquinate = 3-dehydroshikimate + H2O. Its pathway is metabolic intermediate biosynthesis; chorismate biosynthesis; chorismate from D-erythrose 4-phosphate and phosphoenolpyruvate: step 3/7. Catalyzes a trans-dehydration via an enolate intermediate. The chain is 3-dehydroquinate dehydratase from Helicobacter hepaticus (strain ATCC 51449 / 3B1).